A 180-amino-acid chain; its full sequence is Large ribosomal subunit protein uL6 (180 aa).

The protein belongs to the universal ribosomal protein uL6 family. As to quaternary structure, part of the 50S ribosomal subunit.

In terms of biological role, this protein binds to the 23S rRNA, and is important in its secondary structure. It is located near the subunit interface in the base of the L7/L12 stalk, and near the tRNA binding site of the peptidyltransferase center. This Clostridium botulinum (strain Langeland / NCTC 10281 / Type F) protein is Large ribosomal subunit protein uL6.